Here is a 340-residue protein sequence, read N- to C-terminus: Probable dual-specificity RNA methyltransferase RlmN (340 aa).

The active-site Proton acceptor is the Glu90. One can recognise a Radical SAM core domain in the interval 97 to 325; sequence QVSRKTACLS…PVTRRYQRGN (229 aa). An intrachain disulfide couples Cys104 to Cys331. Residues Cys111, Cys115, and Cys118 each coordinate [4Fe-4S] cluster. Residues 157–158, Ser189, 212–214, and Asn288 contribute to the S-adenosyl-L-methionine site; these read GE and SLT. Catalysis depends on Cys331, which acts as the S-methylcysteine intermediate.

This sequence belongs to the radical SAM superfamily. RlmN family. Requires [4Fe-4S] cluster as cofactor.

It localises to the cytoplasm. It carries out the reaction adenosine(2503) in 23S rRNA + 2 reduced [2Fe-2S]-[ferredoxin] + 2 S-adenosyl-L-methionine = 2-methyladenosine(2503) in 23S rRNA + 5'-deoxyadenosine + L-methionine + 2 oxidized [2Fe-2S]-[ferredoxin] + S-adenosyl-L-homocysteine. The catalysed reaction is adenosine(37) in tRNA + 2 reduced [2Fe-2S]-[ferredoxin] + 2 S-adenosyl-L-methionine = 2-methyladenosine(37) in tRNA + 5'-deoxyadenosine + L-methionine + 2 oxidized [2Fe-2S]-[ferredoxin] + S-adenosyl-L-homocysteine. Its function is as follows. Specifically methylates position 2 of adenine 2503 in 23S rRNA and position 2 of adenine 37 in tRNAs. The sequence is that of Probable dual-specificity RNA methyltransferase RlmN from Treponema pallidum (strain Nichols).